The chain runs to 62 residues: Photosystem II reaction center protein Z (62 aa).

The next 2 membrane-spanning stretches (helical) occupy residues alanine 8–alanine 28 and phenylalanine 41–isoleucine 61.

The protein belongs to the PsbZ family. In terms of assembly, PSII is composed of 1 copy each of membrane proteins PsbA, PsbB, PsbC, PsbD, PsbE, PsbF, PsbH, PsbI, PsbJ, PsbK, PsbL, PsbM, PsbT, PsbY, PsbZ, Psb30/Ycf12, at least 3 peripheral proteins of the oxygen-evolving complex and a large number of cofactors. It forms dimeric complexes.

The protein resides in the plastid. The protein localises to the chloroplast thylakoid membrane. May control the interaction of photosystem II (PSII) cores with the light-harvesting antenna, regulates electron flow through the 2 photosystem reaction centers. PSII is a light-driven water plastoquinone oxidoreductase, using light energy to abstract electrons from H(2)O, generating a proton gradient subsequently used for ATP formation. The chain is Photosystem II reaction center protein Z from Jasminum nudiflorum (Winter jasmine).